A 198-amino-acid chain; its full sequence is Na(+)-translocating NADH-quinone reductase subunit E (198 aa).

6 consecutive transmembrane segments (helical) span residues 11-31, 39-59, 77-97, 110-130, 140-160, and 176-196; these read SIFI…FLAV, MGLG…NNLI, FLSF…LEMA, GIFL…SFMV, VVYG…MAGI, and LGIT…FSGI.

The protein belongs to the NqrDE/RnfAE family. Composed of six subunits; NqrA, NqrB, NqrC, NqrD, NqrE and NqrF.

It is found in the cell inner membrane. It catalyses the reaction a ubiquinone + n Na(+)(in) + NADH + H(+) = a ubiquinol + n Na(+)(out) + NAD(+). In terms of biological role, NQR complex catalyzes the reduction of ubiquinone-1 to ubiquinol by two successive reactions, coupled with the transport of Na(+) ions from the cytoplasm to the periplasm. NqrA to NqrE are probably involved in the second step, the conversion of ubisemiquinone to ubiquinol. In Aeromonas hydrophila subsp. hydrophila (strain ATCC 7966 / DSM 30187 / BCRC 13018 / CCUG 14551 / JCM 1027 / KCTC 2358 / NCIMB 9240 / NCTC 8049), this protein is Na(+)-translocating NADH-quinone reductase subunit E.